The chain runs to 232 residues: MTEERRSRATEAFFGRRKGKPLRNQQVDTIENLLPLLKIDLESVPPQNLVALFPADVRSIRLEIGFGGGEHLAHRAVENPETGFIGVEPFVNSMAKLLATVRERELMNIRLYDDDATQLLDWLPEGSIDHIDLLYPDPWPKKKHWKRRFVSDVNLARFHRVLKPGGKFCFASDIDTYVNWTLQHCARHGGFEWTATSADDWRTPYANWPGTRYENKAKREGRSSAYLTFIRR.

Residues Glu63, Glu88, Asp115, and Asp137 each contribute to the S-adenosyl-L-methionine site. Residue Asp137 is part of the active site. Residues Lys141, Asp173, and 211–214 (TRYE) each bind substrate.

This sequence belongs to the class I-like SAM-binding methyltransferase superfamily. TrmB family.

It catalyses the reaction guanosine(46) in tRNA + S-adenosyl-L-methionine = N(7)-methylguanosine(46) in tRNA + S-adenosyl-L-homocysteine. The protein operates within tRNA modification; N(7)-methylguanine-tRNA biosynthesis. In terms of biological role, catalyzes the formation of N(7)-methylguanine at position 46 (m7G46) in tRNA. This Agrobacterium fabrum (strain C58 / ATCC 33970) (Agrobacterium tumefaciens (strain C58)) protein is tRNA (guanine-N(7)-)-methyltransferase.